Reading from the N-terminus, the 597-residue chain is DNA import protein CedB (597 aa).

A helical transmembrane segment spans residues 10 to 30 (VVLLILGIISFNLVFIILAII). Position 286–293 (286–293 (GPTGSGKT)) interacts with ATP.

It localises to the cell membrane. Functionally, part of the Ced system, which is involved in DNA import. This is DNA import protein CedB from Sulfolobus acidocaldarius (strain ATCC 33909 / DSM 639 / JCM 8929 / NBRC 15157 / NCIMB 11770).